Reading from the N-terminus, the 619-residue chain is Protein Atg16l2 (619 aa).

Positions Leu57–Leu78 are disordered. Positions Glu60–Gln70 are enriched in polar residues. Positions Ala116–Lys227 form a coiled coil. WD repeat units follow at residues Ala334–Asn373, Gly378–Thr417, Gly420–Ala454, Tyr455–Val498, Pro500–Val539, Lys546–Arg585, and Pro589–Gln619.

Belongs to the WD repeat ATG16 family. Homooligomer. Heterooligomer with ATG16L1. Interacts with ATG5. Self-oligomerizes to form a 800-kDa complex composed of ATG12-ATG5 and ATG16L2. Interacts with RAB33B.

It localises to the cytoplasm. Its subcellular location is the cytosol. In terms of biological role, may play a role in regulating epithelial homeostasis in an ATG16L1-dependent manner. The protein is Protein Atg16l2 (ATG16L2) of Homo sapiens (Human).